We begin with the raw amino-acid sequence, 214 residues long: Chalcone isomerase-like protein 1 (214 aa).

This sequence belongs to the chalcone isomerase family. Mostly expressed in glandular trichomes (lupulin glands), and, to a lower extent, in cones, cones bracts, leaves, stems and roots.

The protein localises to the cytoplasm. It catalyses the reaction a chalcone = a flavanone.. Its pathway is secondary metabolite biosynthesis; flavonoid biosynthesis. Its function is as follows. Involved in the biosynthesis of prenylated phenolics natural products which contribute to the bitter taste of beer and display broad biological activities. Involved in anthocyanin biosynthesis. Polyketide binding proteins (PBP) which reduces the catalytic activities of CHS_H1 and PT1L and prevents demethylxanthohumol (DMX) production, by binding to DMX and naringenin chalcone (NC) to stabilize the chalconoids ring-opened structure. This is Chalcone isomerase-like protein 1 from Humulus lupulus (European hop).